A 364-amino-acid chain; its full sequence is Dimethylsulfoniopropionate demethylase DmdA (364 aa).

The protein belongs to the GcvT family. DmdA subfamily.

The catalysed reaction is S,S-dimethyl-beta-propiothetin + (6S)-5,6,7,8-tetrahydrofolate = 3-(methylsulfanyl)propanoate + (6S)-5-methyl-5,6,7,8-tetrahydrofolate + H(+). Its function is as follows. Involved in the assimilation of dimethylsulphoniopropionate (DMSP), an important compound in the fixation of carbon in marine phytoplankton, by mediating demethylation of dimethylsulfoniopropionate (DMSP) to methyl-mercaptopropionate (MMPA). The intracellular concentration of DMSP is estimated to be 70 mM. The protein is Dimethylsulfoniopropionate demethylase DmdA of Ruegeria pomeroyi (strain ATCC 700808 / DSM 15171 / DSS-3) (Silicibacter pomeroyi).